Here is a 298-residue protein sequence, read N- to C-terminus: tRNA dimethylallyltransferase (298 aa).

ATP is bound at residue 16–23 (GPTASGKS). 18-23 (TASGKS) is a substrate binding site. 2 interaction with substrate tRNA regions span residues 41 to 44 (DSMQ) and 165 to 169 (QRIVR).

Belongs to the IPP transferase family. As to quaternary structure, monomer. The cofactor is Mg(2+).

It catalyses the reaction adenosine(37) in tRNA + dimethylallyl diphosphate = N(6)-dimethylallyladenosine(37) in tRNA + diphosphate. Its function is as follows. Catalyzes the transfer of a dimethylallyl group onto the adenine at position 37 in tRNAs that read codons beginning with uridine, leading to the formation of N6-(dimethylallyl)adenosine (i(6)A). The chain is tRNA dimethylallyltransferase from Rhizobium rhizogenes (strain K84 / ATCC BAA-868) (Agrobacterium radiobacter).